The following is a 425-amino-acid chain: Serine--tRNA ligase (425 aa).

Residues asparagine 110–proline 134 form a disordered region. The segment covering proline 117–proline 134 has biased composition (basic and acidic residues). Threonine 233–glutamate 235 provides a ligand contact to L-serine. Arginine 264–glutamate 266 provides a ligand contact to ATP. L-serine is bound at residue glutamate 287. Residue glutamate 351–serine 354 coordinates ATP. Residue serine 385 coordinates L-serine.

It belongs to the class-II aminoacyl-tRNA synthetase family. Type-1 seryl-tRNA synthetase subfamily. In terms of assembly, homodimer. The tRNA molecule binds across the dimer.

It localises to the cytoplasm. It carries out the reaction tRNA(Ser) + L-serine + ATP = L-seryl-tRNA(Ser) + AMP + diphosphate + H(+). The enzyme catalyses tRNA(Sec) + L-serine + ATP = L-seryl-tRNA(Sec) + AMP + diphosphate + H(+). The protein operates within aminoacyl-tRNA biosynthesis; selenocysteinyl-tRNA(Sec) biosynthesis; L-seryl-tRNA(Sec) from L-serine and tRNA(Sec): step 1/1. In terms of biological role, catalyzes the attachment of serine to tRNA(Ser). Is also able to aminoacylate tRNA(Sec) with serine, to form the misacylated tRNA L-seryl-tRNA(Sec), which will be further converted into selenocysteinyl-tRNA(Sec). The chain is Serine--tRNA ligase from Synechococcus sp. (strain RCC307).